Consider the following 723-residue polypeptide: Malate synthase G (723 aa).

Acetyl-CoA contacts are provided by residues Val-118, 125–126 (RY), Ser-274, and Arg-311. Arg-338 (proton acceptor) is an active-site residue. Residues Arg-338, Glu-427, and 452–455 (GFLD) each bind glyoxylate. Residues Glu-427 and Asp-455 each contribute to the Mg(2+) site. Position 536 (Pro-536) interacts with acetyl-CoA. Residue Cys-617 is modified to Cysteine sulfenic acid (-SOH). Asp-631 serves as the catalytic Proton donor. Residue Cys-688 is modified to Cysteine sulfenic acid (-SOH).

The protein belongs to the malate synthase family. GlcB subfamily. Monomer. It depends on Mg(2+) as a cofactor.

It is found in the cytoplasm. It carries out the reaction glyoxylate + acetyl-CoA + H2O = (S)-malate + CoA + H(+). Its pathway is carbohydrate metabolism; glyoxylate cycle; (S)-malate from isocitrate: step 2/2. Its function is as follows. Involved in the glycolate utilization. Catalyzes the condensation and subsequent hydrolysis of acetyl-coenzyme A (acetyl-CoA) and glyoxylate to form malate and CoA. This chain is Malate synthase G, found in Escherichia coli O6:H1 (strain CFT073 / ATCC 700928 / UPEC).